The primary structure comprises 247 residues: Centromere protein H (247 aa).

Position 1 is an N-acetylmethionine (M1). Acidic residues predominate over residues 1–14 (MEEQPQMQDADEPA). Residues 1-34 (MEEQPQMQDADEPADSGGEGRAGGPPQVAGAQAA) are disordered. S16 is subject to Phosphoserine. The span at 24 to 34 (GPPQVAGAQAA) shows a compositional bias: low complexity. The stretch at 47–192 (RAQTKQQLLE…KIDLDSMENS (146 aa)) forms a coiled coil. Residue K67 forms a Glycyl lysine isopeptide (Lys-Gly) (interchain with G-Cter in SUMO2) linkage. Phosphothreonine is present on T68.

This sequence belongs to the CENP-H/MCM16 family. In terms of assembly, self-associates. Component of the CENPA-NAC complex, at least composed of CENPA, CENPC, CENPH, CENPM, CENPN, CENPT and CENPU. The CENPA-NAC complex interacts with the CENPA-CAD complex, composed of CENPI, CENPK, CENPL, CENPO, CENPP, CENPQ, CENPR and CENPS. Interacts directly with CENPK. Interacts with KIF2C and NDC80. Interacts with TRIM36.

It localises to the nucleus. The protein resides in the chromosome. Its subcellular location is the centromere. The protein localises to the kinetochore. In terms of biological role, component of the CENPA-NAC (nucleosome-associated) complex, a complex that plays a central role in assembly of kinetochore proteins, mitotic progression and chromosome segregation. The CENPA-NAC complex recruits the CENPA-CAD (nucleosome distal) complex and may be involved in incorporation of newly synthesized CENPA into centromeres. Required for chromosome congression and efficiently align the chromosomes on a metaphase plate. The protein is Centromere protein H of Homo sapiens (Human).